The following is a 388-amino-acid chain: Transcription factor TB1 (388 aa).

The region spanning 115 to 173 is the TCP domain; that stretch reads RKDRHSKISTAGGMRDRRMRLSLDVARKFFALQDMLGFDKASKTVQWLLNMSKAAIREI. 2 disordered regions span residues 180-269 and 289-331; these read SVCE…EKNR and AAGE…VGVS. A compositionally biased stretch (polar residues) spans 187-201; it reads SSSLSVDGKQQQHSN. Basic and acidic residues-rich tracts occupy residues 210 to 224 and 247 to 269; these read GDHK…DGKK and VPDK…EKNR. A R domain is found at 250-267; sequence KESRAKARERARERTKEK. A compositionally biased stretch (low complexity) spans 289-314; sequence AAGEDKSPTSPSNNLNHSSSTNLVST.

Interacts with MADS57. In terms of tissue distribution, expressed in the axillary bud of the first formed leaf node. Expressed in axillary buds, shoot apical meristem, young leaves, vascular tissues and the tips of crown roots.

The protein resides in the nucleus. Its function is as follows. Probable transcription factor that functions as a negative regulator of lateral branching, presumably through its expression in axillary buds. Involved in the fine tuning of shoot branching. May function as an integrator of multiple signaling pathways to regulate the development of axillary buds. Works partially downstream of strigolactones to inhibit bud outgrowth. Binds to MADS57 to suppress the negative regulation of D14 by MADS57 and balance the expression of D14 for tillering. In Oryza sativa subsp. japonica (Rice), this protein is Transcription factor TB1.